A 2190-amino-acid chain; its full sequence is Voltage-dependent L-type calcium channel subunit alpha-1D (2190 aa).

Low complexity predominate over residues 1-10; sequence MQHHQQQQPE. 2 disordered regions span residues 1 to 44 and 57 to 96; these read MQHH…SKQT and QAKAAQNMNTTTAQPVGSLSQRKRQQYAKSKKQGNTSNSR. Residues 1–121 lie on the Cytoplasmic side of the membrane; that stretch reads MQHHQQQQPE…RACISLVEWK (121 aa). Composition is skewed to polar residues over residues 31–44 and 63–76; these read PTTQSNSSAPSKQT and NMNTTTAQPVGSLS. A compositionally biased stretch (basic residues) spans 77–88; the sequence is QRKRQQYAKSKK. One copy of the I repeat lies at 108 to 404; that stretch reads NPIRRACISL…LVLGVLSGEF (297 aa). A helical transmembrane segment spans residues 122 to 140; that stretch reads PFDIFILLSIFANCVALAV. Topologically, residues 141–158 are extracellular; sequence YIPFPEDDSNSTNHNLEK. N-linked (GlcNAc...) asparagine glycosylation is present at N150. Residues 159–178 form a helical membrane-spanning segment; it reads VEYAFLIIFTVETFLKIIAY. Topologically, residues 179–190 are cytoplasmic; that stretch reads GLLLHPNAYVRN. The helical transmembrane segment at 191-209 threads the bilayer; that stretch reads GWNLLDFVIVVVGLFSVIL. Residues 210–230 lie on the Extracellular side of the membrane; sequence EQLTKETEGGSHSGGKPGGFD. The helical transmembrane segment at 231–249 threads the bilayer; the sequence is VKALRAFRVLRPLRLVSGV. The Cytoplasmic segment spans residues 250 to 268; the sequence is PSLQVVLNSIIKAMVPLLH. The helical transmembrane segment at 269 to 288 threads the bilayer; that stretch reads IALLVLFVIIIYAIIGLELF. The Extracellular portion of the chain corresponds to 289–376; it reads IGKMHKSCFL…WVNDAIGCEW (88 aa). A glycan (N-linked (GlcNAc...) asparagine) is linked at N324. Residue E359 participates in Ca(2+) binding. Residues 377–401 traverse the membrane as a helical segment; it reads PWIYFVSLIILGSFFVLNLVLGVLS. Residues 402–544 are Cytoplasmic-facing; the sequence is GEFSKEREKA…RKCRAAVKSV (143 aa). The segment at 424 to 441 is binding to the beta subunit; sequence QQLEEDLKGYLDWITQAE. The interval 478-500 is disordered; sequence GRSSNKHASMPTSETESVNTENV. The II repeat unit spans residues 530-776; it reads NRFNRRKCRA…VFLAIAVDNL (247 aa). A helical membrane pass occupies residues 545–564; it reads TFYWLVIVLVFLNTLTISSE. The Extracellular portion of the chain corresponds to 565-579; that stretch reads HYNQPDWLTQIQDIA. Residues 580–598 form a helical membrane-spanning segment; sequence NKVLLALFTCEMLVKMYSL. Residues 599 to 606 lie on the Cytoplasmic side of the membrane; sequence GLQAYFVS. A helical membrane pass occupies residues 607–625; sequence LFNRFDCFVVCGGIVETIL. The Extracellular segment spans residues 626–635; sequence VELEIMSPLG. A helical membrane pass occupies residues 636–654; the sequence is ISVFRCVRLLRIFKVTRHW. At 655–673 the chain is on the cytoplasmic side; sequence ASLSNLVASLLNSMKSIAS. Residues 674–694 traverse the membrane as a helical segment; it reads LLLLLFLFIIIFSLLGMQLFG. Topologically, residues 695–748 are extracellular; it reads GKFNFDETQTKRSTFDNFPQALLTVFQILTGEDWNAVMYDGIMAYGGPSSSGMI. E726 contributes to the Ca(2+) binding site. The helical transmembrane segment at 749 to 773 threads the bilayer; sequence VCIYFIILFICGNYILLNVFLAIAV. At 774–907 the chain is on the cytoplasmic side; that stretch reads DNLADAESLN…VGCHRLINHH (134 aa). Residues 787-823 show a composition bias toward basic and acidic residues; that stretch reads KEEAEEKERKKNARKESLENKKSEKSEGDQKKPKDSK. Residues 787–869 are disordered; the sequence is KEEAEEKERK…VPAGPRPRRI (83 aa). Positions 847–859 are enriched in acidic residues; that stretch reads VGEDEEDEEDEPE. One copy of the III repeat lies at 894–1176; the sequence is NPIRVGCHRL…IFVGFVIVTF (283 aa). The chain crosses the membrane as a helical span at residues 908-926; the sequence is IFTNLILVFIMLSSVSLAA. The Extracellular portion of the chain corresponds to 927-942; sequence EDPIRSHSFRNNILGY. The chain crosses the membrane as a helical span at residues 943–962; it reads ADYVFTSMFTFEIILKMTAF. The Cytoplasmic segment spans residues 963–974; that stretch reads GAFLHKGSFCRN. A helical membrane pass occupies residues 975-993; that stretch reads YFNLLDLLVVGVSLVSFGI. The Extracellular portion of the chain corresponds to 994–999; the sequence is QSSAIS. Residues 1000–1019 form a helical membrane-spanning segment; it reads VVKILRVLRVLRPLRAINRA. Topologically, residues 1020 to 1038 are cytoplasmic; the sequence is KGLKHVVQCVFVAIRTIGN. A helical transmembrane segment spans residues 1039-1058; it reads IMIVTTLLQFMFACIGVQLF. At 1059 to 1148 the chain is on the extracellular side; that stretch reads KGKFYKCTDE…VGPVYNYRVE (90 aa). Positions 1096–1186 are dihydropyridine binding; that stretch reads RVWQNSDFNF…QEQGEQEYKN (91 aa). E1122 is a Ca(2+) binding site. A helical membrane pass occupies residues 1149-1169; sequence ISIFFIIYIIIIAFFMMNIFV. Topologically, residues 1170–1226 are cytoplasmic; sequence GFVIVTFQEQGEQEYKNCELDKNQRQCVEYALKARPLRRYIPKNPYQYKFWYVVNST. Residues 1213–1496 form an IV repeat; it reads NPYQYKFWYV…LFVAVIMDNF (284 aa). The chain crosses the membrane as a helical span at residues 1227 to 1245; sequence GFEYIMFVLIMLNTLCLAM. Residues 1246 to 1260 are Extracellular-facing; the sequence is QHYGQSKLFNDAMDI. Residues 1261-1280 traverse the membrane as a helical segment; that stretch reads MNMVFTGVFTVEMVLKLIAF. The Cytoplasmic segment spans residues 1281 to 1297; that stretch reads KPKIFVRKKERWLGYFS. A helical membrane pass occupies residues 1298 to 1319; sequence DAWNTFDSLIVIGSIVDVVLSE. The Extracellular segment spans residues 1320–1342; the sequence is ADPKPTETVTTDESGNSEDSARI. Residues 1343–1362 traverse the membrane as a helical segment; that stretch reads SITFFRLFRVMRLVKLLSRG. At 1363–1381 the chain is on the cytoplasmic side; sequence EGIRTLLWTFIKSFQALPY. The chain crosses the membrane as a helical span at residues 1382 to 1401; it reads VALLIAMLFFIYAVIGMQVF. Residues 1402–1468 are Extracellular-facing; that stretch reads GKVAMRDNNQ…GEEYTCGSNF (67 aa). The dihydropyridine binding stretch occupies residues 1449-1515; the sequence is RCDPESDYNP…LGPHHLDEFK (67 aa). The interval 1461–1504 is phenylalkylamine binding; sequence EYTCGSNFAIIYFISFYMLCAFLIINLFVAVIMDNFDYLTRDWS. A helical transmembrane segment spans residues 1469 to 1493; the sequence is AIIYFISFYMLCAFLIINLFVAVIM. The Cytoplasmic portion of the chain corresponds to 1494-2190; sequence DNFDYLTRDW…ADEMICITSL (697 aa). 4 disordered regions span residues 1736-1787, 1803-1833, 1917-1952, and 1995-2025; these read THRP…NANL, FGSHEHRSENGYHSYSRADHEKRRRPSSRRT, HGFFEEDDSQTCYDTKRSPRRRLLPPTPASNRRSSF, and SSKAHKHSPSRSTRSWATPPATPPNRDHTPY. The span at 1805 to 1823 shows a compositional bias: basic and acidic residues; it reads SHEHRSENGYHSYSRADHE. Residues 1824–1833 are compositionally biased toward basic residues; that stretch reads KRRRPSSRRT.

It belongs to the calcium channel alpha-1 subunit (TC 1.A.1.11) family. CACNA1D subfamily. In terms of assembly, voltage-dependent calcium channels are multisubunit complexes, consisting of alpha-1, alpha-2, beta and delta subunits in a 1:1:1:1 ratio. The channel activity is directed by the pore-forming and voltage-sensitive alpha-1 subunit. In many cases, this subunit is sufficient to generate voltage-sensitive calcium channel activity. The auxiliary subunits beta and alpha-2/delta linked by a disulfide bridge regulate the channel activity. Interacts with RIMBP2. As to expression, expressed in the basilar papilla of the cochlea.

Its subcellular location is the membrane. It catalyses the reaction Ca(2+)(in) = Ca(2+)(out). In terms of biological role, the isoform alpha-1D gives rise to L-type calcium currents. Long-lasting (L-type) calcium channels belong to the 'high-voltage activated' (HVA) group. The polypeptide is Voltage-dependent L-type calcium channel subunit alpha-1D (CACNA1D) (Gallus gallus (Chicken)).